The sequence spans 930 residues: Beta-mannosidase A (930 aa).

A signal peptide spans 1–21 (MHVKAETVLALLTPGLPSVVG). 5 N-linked (GlcNAc...) asparagine glycosylation sites follow: N62, N246, N281, N315, and N346. E478 functions as the Proton donor in the catalytic mechanism. 11 N-linked (GlcNAc...) asparagine glycosylation sites follow: N536, N607, N630, N657, N737, N760, N782, N789, N797, N823, and N909.

This sequence belongs to the glycosyl hydrolase 2 family. Beta-mannosidase A subfamily. As to quaternary structure, homodimer.

The protein resides in the secreted. The catalysed reaction is Hydrolysis of terminal, non-reducing beta-D-mannose residues in beta-D-mannosides.. It participates in glycan metabolism; N-glycan degradation. Its function is as follows. Exoglycosidase that cleaves the single beta-linked mannose residue from the non-reducing end of beta-mannosidic oligosaccharides of various complexity and length. Involved in the degradation of polymeric mannan and galactomannan. In Neosartorya fischeri (strain ATCC 1020 / DSM 3700 / CBS 544.65 / FGSC A1164 / JCM 1740 / NRRL 181 / WB 181) (Aspergillus fischerianus), this protein is Beta-mannosidase A (mndA).